Consider the following 148-residue polypeptide: MKVILLQDVKPLGKKGEIVNVSDGYARNNIIPKKLGVEATPKNLNDLKLQNQHADKVAQENYESALALAKVVENTKVVVKLRSGEGGRTFGSISTKEISAAAKEQHGLELDKKKMQLNESIKALGNYEVPVKLHPKVTANLTVSVVEG.

Belongs to the bacterial ribosomal protein bL9 family.

Binds to the 23S rRNA. The polypeptide is Large ribosomal subunit protein bL9 (Agathobacter rectalis (strain ATCC 33656 / DSM 3377 / JCM 17463 / KCTC 5835 / VPI 0990) (Eubacterium rectale)).